We begin with the raw amino-acid sequence, 229 residues long: 7-cyano-7-deazaguanine synthase (229 aa).

Position 9-19 (9-19 (LSGGLDSATVL)) interacts with ATP. Cys188, Cys198, Cys201, and Cys204 together coordinate Zn(2+).

Belongs to the QueC family. The cofactor is Zn(2+).

The catalysed reaction is 7-carboxy-7-deazaguanine + NH4(+) + ATP = 7-cyano-7-deazaguanine + ADP + phosphate + H2O + H(+). It participates in purine metabolism; 7-cyano-7-deazaguanine biosynthesis. Catalyzes the ATP-dependent conversion of 7-carboxy-7-deazaguanine (CDG) to 7-cyano-7-deazaguanine (preQ(0)). This chain is 7-cyano-7-deazaguanine synthase, found in Methylobacillus flagellatus (strain ATCC 51484 / DSM 6875 / VKM B-1610 / KT).